We begin with the raw amino-acid sequence, 265 residues long: Putative Tubby-like protein 4 (265 aa).

The 44-residue stretch at Met-1–Val-44 folds into the F-box domain. Residues Ser-228 to Arg-250 form the FBD domain.

This sequence belongs to the TUB family.

This Arabidopsis thaliana (Mouse-ear cress) protein is Putative Tubby-like protein 4.